Consider the following 334-residue polypeptide: Ribosomal RNA large subunit methyltransferase F (334 aa).

Residues 1–25 form a disordered region; it reads MPRPSSPRPDAERKSASPLHPRNRH.

It belongs to the methyltransferase superfamily. METTL16/RlmF family.

The protein resides in the cytoplasm. It carries out the reaction adenosine(1618) in 23S rRNA + S-adenosyl-L-methionine = N(6)-methyladenosine(1618) in 23S rRNA + S-adenosyl-L-homocysteine + H(+). In terms of biological role, specifically methylates the adenine in position 1618 of 23S rRNA. The sequence is that of Ribosomal RNA large subunit methyltransferase F from Pseudomonas paraeruginosa (strain DSM 24068 / PA7) (Pseudomonas aeruginosa (strain PA7)).